We begin with the raw amino-acid sequence, 473 residues long: Nitrogenase vanadium-iron protein alpha chain (473 aa).

C49, C74, and C137 together coordinate [8Fe-7S] cluster. [7Fe-V-9S-C-homocitryl] cluster is bound by residues C256 and H422.

The protein belongs to the NifD/NifK/NifE/NifN family. In terms of assembly, hexamer of two alpha, two beta, and two delta chains. Requires [8Fe-7S] cluster as cofactor. The cofactor is [7Fe-V-9S-C-homocitryl] cluster.

It catalyses the reaction N2 + 8 reduced [2Fe-2S]-[ferredoxin] + 16 ATP + 16 H2O = H2 + 8 oxidized [2Fe-2S]-[ferredoxin] + 2 NH4(+) + 16 ADP + 16 phosphate + 6 H(+). This vanadium-iron protein is part of the nitrogenase complex that catalyzes the key enzymatic reactions in nitrogen fixation. This Azotobacter chroococcum mcd 1 protein is Nitrogenase vanadium-iron protein alpha chain (vnfD).